The primary structure comprises 161 residues: ATP synthase subunit b' (161 aa).

A helical membrane pass occupies residues 26–45 (LPLMAIQFLLLAFVLDKIFY).

Belongs to the ATPase B chain family. As to quaternary structure, F-type ATPases have 2 components, F(1) - the catalytic core - and F(0) - the membrane proton channel. F(1) has five subunits: alpha(3), beta(3), gamma(1), delta(1), epsilon(1). F(0) has four main subunits: a(1), b(1), b'(1) and c(10-14). The alpha and beta chains form an alternating ring which encloses part of the gamma chain. F(1) is attached to F(0) by a central stalk formed by the gamma and epsilon chains, while a peripheral stalk is formed by the delta, b and b' chains.

It is found in the cellular thylakoid membrane. Functionally, f(1)F(0) ATP synthase produces ATP from ADP in the presence of a proton or sodium gradient. F-type ATPases consist of two structural domains, F(1) containing the extramembraneous catalytic core and F(0) containing the membrane proton channel, linked together by a central stalk and a peripheral stalk. During catalysis, ATP synthesis in the catalytic domain of F(1) is coupled via a rotary mechanism of the central stalk subunits to proton translocation. Its function is as follows. Component of the F(0) channel, it forms part of the peripheral stalk, linking F(1) to F(0). The b'-subunit is a diverged and duplicated form of b found in plants and photosynthetic bacteria. This is ATP synthase subunit b' from Trichodesmium erythraeum (strain IMS101).